A 455-amino-acid chain; its full sequence is N(6)-adenosine-methyltransferase non-catalytic subunit METTL14 (455 aa).

A disordered region spans residues 21-96; it reads QQLGAESPDS…QHQEESGPYE (76 aa). The span at 37–51 shows a compositional bias: basic and acidic residues; the sequence is SKDEQKEIEETRETC. Acidic residues predominate over residues 69 to 82; the sequence is EGEDPEEDVEEQKE. Interaction with METTL3 stretches follow at residues 134 to 135 and 236 to 237; these read RD and SG. Residues 244–253 are positively charged region required for RNA-binding; sequence RMCLRKWGFR. Interaction with METTL3 stretches follow at residues 254-257 and 277-286; these read RCED and KAVFQRTKEH. The interval 296 to 297 is positively charged region required for RNA-binding; it reads RR. The segment at 307–311 is interaction with METTL3; it reads NVDID. Residues 392-455 are disordered; sequence ERLRPKSPPP…GGPHRGFPPR (64 aa). The segment covering 407 to 421 has biased composition (gly residues); that stretch reads RGGGAPRGGRGGPAA. Positions 423 to 441 are enriched in basic and acidic residues; it reads RGDRGRERNRPNFRGDRGG.

The protein belongs to the MT-A70-like family. As to quaternary structure, heterodimer; heterodimerizes with mettl3 to form an antiparallel heterodimer that constitutes an active methyltransferase. Component of the WMM complex, a N6-methyltransferase complex composed of a catalytic subcomplex, named MAC, and of an associated subcomplex, named MACOM. The MAC subcomplex is composed of mettl3 and mettl14.

Its subcellular location is the nucleus. In terms of biological role, the METTL3-METTL14 heterodimer forms a N6-methyltransferase complex that methylates adenosine residues at the N(6) position of some mRNAs and regulates the circadian clock, differentiation of embryonic stem cells and cortical neurogenesis. In the heterodimer formed with mettl3, mettl14 constitutes the RNA-binding scaffold that recognizes the substrate rather than the catalytic core. N6-methyladenosine (m6A), which takes place at the 5'-[AG]GAC-3' consensus sites of some mRNAs, plays a role in mRNA stability and processing. This chain is N(6)-adenosine-methyltransferase non-catalytic subunit METTL14 (mettl14), found in Danio rerio (Zebrafish).